We begin with the raw amino-acid sequence, 396 residues long: Stearoyl-[acyl-carrier-protein] 9-desaturase, chloroplastic (396 aa).

The N-terminal 33 residues, 1–33 (MALKLNPFLSQTQKLPSFALPPMASTRSPKFYM), are a transit peptide targeting the chloroplast. Positions 138, 176, 179, 229, 262, and 265 each coordinate Fe cation.

It belongs to the fatty acid desaturase type 2 family. As to quaternary structure, homodimer. Fe(2+) serves as cofactor. As to expression, higher levels in developing seeds than in leaf and root tissues.

Its subcellular location is the plastid. It is found in the chloroplast. It catalyses the reaction octadecanoyl-[ACP] + 2 reduced [2Fe-2S]-[ferredoxin] + O2 + 2 H(+) = (9Z)-octadecenoyl-[ACP] + 2 oxidized [2Fe-2S]-[ferredoxin] + 2 H2O. It functions in the pathway lipid metabolism; fatty acid metabolism. In terms of biological role, converts stearoyl-ACP to oleoyl-ACP by introduction of a cis double bond between carbons 9 and 10 of the acyl chain. This chain is Stearoyl-[acyl-carrier-protein] 9-desaturase, chloroplastic, found in Ricinus communis (Castor bean).